Consider the following 356-residue polypeptide: NADH-quinone oxidoreductase subunit H (356 aa).

8 helical membrane-spanning segments follow: residues 18 to 38 (IIMIAQSVLLLVVLLIAIAYI), 87 to 107 (GVFLLAPLVSCVLALAAWAVI), 120 to 140 (VGILFIFAISSLSIYGIIMAG), 166 to 186 (IGFVIITVLLCAGTLNLSAVV), 205 to 225 (ILNWYVWPLFPMFVVFYVSAL), 265 to 285 (AITTMCALATILFLGGWLPPI), 292 to 312 (WVPGVIWFALKLFFMFFLIAM), and 333 to 353 (FLPLSLVMVVVVAGVLHFAGI).

Belongs to the complex I subunit 1 family. As to quaternary structure, NDH-1 is composed of 14 different subunits. Subunits NuoA, H, J, K, L, M, N constitute the membrane sector of the complex.

Its subcellular location is the cell inner membrane. The catalysed reaction is a quinone + NADH + 5 H(+)(in) = a quinol + NAD(+) + 4 H(+)(out). In terms of biological role, NDH-1 shuttles electrons from NADH, via FMN and iron-sulfur (Fe-S) centers, to quinones in the respiratory chain. The immediate electron acceptor for the enzyme in this species is believed to be ubiquinone. Couples the redox reaction to proton translocation (for every two electrons transferred, four hydrogen ions are translocated across the cytoplasmic membrane), and thus conserves the redox energy in a proton gradient. This subunit may bind ubiquinone. The polypeptide is NADH-quinone oxidoreductase subunit H (Bradyrhizobium sp. (strain ORS 278)).